The primary structure comprises 306 residues: Glutaminase (306 aa).

7 residues coordinate substrate: S64, N115, E159, N166, Y190, Y242, and V260.

Belongs to the glutaminase family. Homotetramer.

It carries out the reaction L-glutamine + H2O = L-glutamate + NH4(+). The chain is Glutaminase from Aliivibrio fischeri (strain MJ11) (Vibrio fischeri).